The chain runs to 277 residues: Probable endonuclease 4 (277 aa).

Histidine 67, histidine 107, glutamate 142, aspartate 176, histidine 179, histidine 211, aspartate 224, histidine 226, and glutamate 256 together coordinate Zn(2+).

The protein belongs to the AP endonuclease 2 family. Requires Zn(2+) as cofactor.

It catalyses the reaction Endonucleolytic cleavage to 5'-phosphooligonucleotide end-products.. In terms of biological role, endonuclease IV plays a role in DNA repair. It cleaves phosphodiester bonds at apurinic or apyrimidinic (AP) sites, generating a 3'-hydroxyl group and a 5'-terminal sugar phosphate. The sequence is that of Probable endonuclease 4 from Akkermansia muciniphila (strain ATCC BAA-835 / DSM 22959 / JCM 33894 / BCRC 81048 / CCUG 64013 / CIP 107961 / Muc).